The chain runs to 250 residues: GTP cyclohydrolase 1 (250 aa).

Basic and acidic residues-rich tracts occupy residues 1–14 (MEKG…EKPR) and 35–44 (PAEKPPRPEA). The segment at 1–64 (MEKGPVRAPA…GERPRSEEDN (64 aa)) is disordered. Serine 60 and serine 81 each carry phosphoserine. Positions 141, 144, and 212 each coordinate Zn(2+).

It belongs to the GTP cyclohydrolase I family. Toroid-shaped homodecamer, composed of a dimer of pentamers. The inactive isoforms also form decamers and may possibly be incorporated into GCH1 heterodecamers, decreasing enzyme stability and activity. Interacts with AHSA1 and GCHFR/GFRP. Phosphorylated by casein kinase II at Ser-81 in HAECs during oscillatory shear stress; phosphorylation at Ser-81 results in increased enzyme activity. In epidermis, expressed predominantly in basal undifferentiated keratinocytes and in some but not all melanocytes (at protein level).

The protein localises to the cytoplasm. It localises to the nucleus. The enzyme catalyses GTP + H2O = 7,8-dihydroneopterin 3'-triphosphate + formate + H(+). Its pathway is cofactor biosynthesis; 7,8-dihydroneopterin triphosphate biosynthesis; 7,8-dihydroneopterin triphosphate from GTP: step 1/1. With respect to regulation, GTP shows a positive allosteric effect, and tetrahydrobiopterin inhibits the enzyme activity. Zinc is required for catalytic activity. Inhibited by Mg(2+). Its function is as follows. Positively regulates nitric oxide synthesis in umbilical vein endothelial cells (HUVECs). May be involved in dopamine synthesis. May modify pain sensitivity and persistence. Isoform GCH-1 is the functional enzyme, the potential function of the enzymatically inactive isoforms remains unknown. In Homo sapiens (Human), this protein is GTP cyclohydrolase 1 (GCH1).